The following is a 558-amino-acid chain: Membrane protein insertase YidC (558 aa).

5 consecutive transmembrane segments (helical) span residues 3–23, 364–384, 438–458, 477–497, and 508–528; these read IKRT…FDNW, FVGN…AVFF, LPVV…LASV, PYFI…KLNP, and MMFM…GLVL.

It belongs to the OXA1/ALB3/YidC family. Type 1 subfamily. In terms of assembly, interacts with the Sec translocase complex via SecD. Specifically interacts with transmembrane segments of nascent integral membrane proteins during membrane integration.

Its subcellular location is the cell inner membrane. Required for the insertion and/or proper folding and/or complex formation of integral membrane proteins into the membrane. Involved in integration of membrane proteins that insert both dependently and independently of the Sec translocase complex, as well as at least some lipoproteins. Aids folding of multispanning membrane proteins. In Burkholderia mallei (strain NCTC 10247), this protein is Membrane protein insertase YidC.